The primary structure comprises 450 residues: MQVSVETTEGLGRRMTVQVPAEQVEEKVDQRLRSLRGNVRMDGFRPGKVPLKVVRKRYGPQVRGEVLSELVQSTYSEALREKELRPAGNPEIEPKQTEEGKDLEYQATFEVLPSFEVTGLDQIKVERPQVEITDADVDEVLERLRKQQAEYNEVDRASQEGDRVVIDFKGTVDGEEFSGNEGNDVPVVLGAGQMPPAFEEGLTGVKAGDETTIEHTFPEEFPDSEVAGKAGQFAVTVKTVEAPEYPEIDDAFAEKVGVKEGGVEKLREAIKTNLERERDQTVASRVKHQVMDQLLDITDIELPKVLVDAEIDQLRQQEQSRQQQSGQEEPDDLPAALFEENARRRVALGLIVNELVRSNDIKLDRDRVMQSLQEMAAGYEQPEEVLRYYAQNRQLMEGVEVAVLEDQVVDYVVQQAQVEDKPMSLQELMSPQQPEAESAEGESKQDETKE.

The 86-residue stretch at 161 to 246 (GDRVVIDFKG…VKTVEAPEYP (86 aa)) folds into the PPIase FKBP-type domain. The tract at residues 422 to 450 (PMSLQELMSPQQPEAESAEGESKQDETKE) is disordered. Over residues 441–450 (GESKQDETKE) the composition is skewed to basic and acidic residues.

This sequence belongs to the FKBP-type PPIase family. Tig subfamily.

It localises to the cytoplasm. The catalysed reaction is [protein]-peptidylproline (omega=180) = [protein]-peptidylproline (omega=0). Involved in protein export. Acts as a chaperone by maintaining the newly synthesized protein in an open conformation. Functions as a peptidyl-prolyl cis-trans isomerase. This is Trigger factor from Alkalilimnicola ehrlichii (strain ATCC BAA-1101 / DSM 17681 / MLHE-1).